Reading from the N-terminus, the 343-residue chain is Phenylalanine--tRNA ligase alpha subunit (343 aa).

Glu-256 is a binding site for Mg(2+).

It belongs to the class-II aminoacyl-tRNA synthetase family. Phe-tRNA synthetase alpha subunit type 1 subfamily. Tetramer of two alpha and two beta subunits. Requires Mg(2+) as cofactor.

It localises to the cytoplasm. The catalysed reaction is tRNA(Phe) + L-phenylalanine + ATP = L-phenylalanyl-tRNA(Phe) + AMP + diphosphate + H(+). The protein is Phenylalanine--tRNA ligase alpha subunit of Prosthecochloris aestuarii (strain DSM 271 / SK 413).